The following is a 751-amino-acid chain: Glutamate carboxypeptidase 2 (751 aa).

At 1 to 19 (MWNPLHETDSTSVAWRRPR) the chain is on the cytoplasmic side. Position 10 is a phosphoserine (serine 10). The helical; Signal-anchor for type II membrane protein transmembrane segment at 20-43 (WLCAGALVLAAGLFVLGFLFGWFI) threads the bilayer. Topologically, residues 44–750 (KSPNEAANIS…QAAAGTLREV (707 aa)) are extracellular. 6 N-linked (GlcNAc...) asparagine glycosylation sites follow: asparagine 51, asparagine 77, asparagine 122, asparagine 141, asparagine 154, and asparagine 196. 2 residues coordinate substrate: arginine 211 and asparagine 258. Threonine 270 and tyrosine 273 together coordinate Ca(2+). The tract at residues 275–588 (ANEYAYRLQI…QVRGGIVFEL (314 aa)) is NAALADase. Asparagine 337 carries an N-linked (GlcNAc...) asparagine glycan. Histidine 378 and aspartate 388 together coordinate Zn(2+). Substrate is bound at residue glutamate 425. Glutamate 425 functions as the Nucleophile; for NAALADase activity in the catalytic mechanism. Glutamate 426 is a binding site for Zn(2+). Ca(2+)-binding residues include glutamate 434 and glutamate 437. Residue aspartate 454 coordinates Zn(2+). Residues asparagine 460 and asparagine 477 are each glycosylated (N-linked (GlcNAc...) asparagine). Residues 518 to 519 (SG), asparagine 520, 535 to 537 (RAR), tyrosine 553, and 553 to 554 (YH) contribute to the substrate site. Residue histidine 554 coordinates Zn(2+). Asparagine 614 is a glycosylation site (N-linked (GlcNAc...) asparagine). Serine 629 functions as the Charge relay system in the catalytic mechanism. N-linked (GlcNAc...) asparagine glycans are attached at residues asparagine 639 and asparagine 646. Active-site charge relay system residues include aspartate 667 and histidine 690. 700–701 (KY) is a binding site for substrate.

It belongs to the peptidase M28 family. M28B subfamily. In terms of assembly, homodimer. Zn(2+) is required as a cofactor. As to expression, high expression in the duodenum and in the jejunum brush-border membrane. Weak expression in kidney.

It localises to the cell membrane. The catalysed reaction is Release of an unsubstituted, C-terminal glutamyl residue, typically from Ac-Asp-Glu or folylpoly-gamma-glutamates.. With respect to regulation, the NAALADase activity is inhibited by quisqualic acid, beta-NAAG and 2-(phosphonomethyl) pentanedioic acid (PMPA). Ethanol ingestion decreases the folate hydrolase activity by 50%. Its function is as follows. Has both folate hydrolase and N-acetylated-alpha-linked-acidic dipeptidase (NAALADase) activity. Has a preference for tri-alpha-glutamate peptides. In the intestine, required for the uptake of folate. In the brain, modulates excitatory neurotransmission through the hydrolysis of the neuropeptide, N-aceylaspartylglutamate (NAAG), thereby releasing glutamate. In terms of biological role, also exhibits a dipeptidyl-peptidase IV type activity. In vitro, cleaves Gly-Pro-AMC. The polypeptide is Glutamate carboxypeptidase 2 (FOLH1) (Sus scrofa (Pig)).